Consider the following 409-residue polypeptide: NADH-quinone oxidoreductase subunit D (409 aa).

This sequence belongs to the complex I 49 kDa subunit family. In terms of assembly, NDH-1 is composed of 14 different subunits. Subunits NuoB, C, D, E, F, and G constitute the peripheral sector of the complex.

It is found in the cell inner membrane. The catalysed reaction is a quinone + NADH + 5 H(+)(in) = a quinol + NAD(+) + 4 H(+)(out). Its function is as follows. NDH-1 shuttles electrons from NADH, via FMN and iron-sulfur (Fe-S) centers, to quinones in the respiratory chain. The immediate electron acceptor for the enzyme in this species is believed to be ubiquinone. Couples the redox reaction to proton translocation (for every two electrons transferred, four hydrogen ions are translocated across the cytoplasmic membrane), and thus conserves the redox energy in a proton gradient. The polypeptide is NADH-quinone oxidoreductase subunit D (Helicobacter pylori (strain P12)).